Here is a 485-residue protein sequence, read N- to C-terminus: Glutamyl-tRNA(Gln) amidotransferase subunit A (485 aa).

Residues lysine 79 and serine 154 each act as charge relay system in the active site. Serine 178 (acyl-ester intermediate) is an active-site residue.

It belongs to the amidase family. GatA subfamily. In terms of assembly, heterotrimer of A, B and C subunits.

The enzyme catalyses L-glutamyl-tRNA(Gln) + L-glutamine + ATP + H2O = L-glutaminyl-tRNA(Gln) + L-glutamate + ADP + phosphate + H(+). In terms of biological role, allows the formation of correctly charged Gln-tRNA(Gln) through the transamidation of misacylated Glu-tRNA(Gln) in organisms which lack glutaminyl-tRNA synthetase. The reaction takes place in the presence of glutamine and ATP through an activated gamma-phospho-Glu-tRNA(Gln). The sequence is that of Glutamyl-tRNA(Gln) amidotransferase subunit A from Staphylococcus aureus.